We begin with the raw amino-acid sequence, 46 residues long: Major urinary protein (46 aa).

Asn15 carries N-linked (GlcNAc...) asparagine glycosylation.

This sequence belongs to the calycin superfamily. Lipocalin family. Found in many tissues including liver, urine, preputial gland, clitoral gland, submandibular gland and salivary gland.

It is found in the secreted. In terms of biological role, binds pheromones that are released from drying urine of males. These pheromones affect the sexual behavior of females. Acts as a shuttle for pheromonal communication between individuals of the same species. In Rattus rattus (Black rat), this protein is Major urinary protein.